A 437-amino-acid polypeptide reads, in one-letter code: Dihydrofolate synthase/folylpolyglutamate synthase (437 aa).

Residue 28–30 (DLG) coordinates 7,8-dihydropteroate. ATP is bound at residue 58–61 (GKGT). Ser-82 contributes to the Mg(2+) binding site. 120-123 (TYFE) contacts 7,8-dihydropteroate. Glu-144 contributes to the Mg(2+) binding site. 151–153 (LDA) contributes to the 7,8-dihydropteroate binding site. Position 171 (His-171) interacts with Mg(2+). Residues Asn-255, Arg-287, and Asp-316 each contribute to the ATP site.

Belongs to the folylpolyglutamate synthase family. In terms of assembly, monomer. Mg(2+) is required as a cofactor.

It carries out the reaction 7,8-dihydropteroate + L-glutamate + ATP = 7,8-dihydrofolate + ADP + phosphate + H(+). It catalyses the reaction (6S)-5,6,7,8-tetrahydrofolyl-(gamma-L-Glu)(n) + L-glutamate + ATP = (6S)-5,6,7,8-tetrahydrofolyl-(gamma-L-Glu)(n+1) + ADP + phosphate + H(+). The catalysed reaction is 10-formyltetrahydrofolyl-(gamma-L-Glu)(n) + L-glutamate + ATP = 10-formyltetrahydrofolyl-(gamma-L-Glu)(n+1) + ADP + phosphate + H(+). The enzyme catalyses (6R)-5,10-methylenetetrahydrofolyl-(gamma-L-Glu)(n) + L-glutamate + ATP = (6R)-5,10-methylenetetrahydrofolyl-(gamma-L-Glu)(n+1) + ADP + phosphate + H(+). It functions in the pathway cofactor biosynthesis; tetrahydrofolate biosynthesis; 7,8-dihydrofolate from 2-amino-4-hydroxy-6-hydroxymethyl-7,8-dihydropteridine diphosphate and 4-aminobenzoate: step 2/2. It participates in cofactor biosynthesis; tetrahydrofolylpolyglutamate biosynthesis. Functions in two distinct reactions of the de novo folate biosynthetic pathway. Catalyzes the addition of a glutamate residue to dihydropteroate (7,8-dihydropteroate or H2Pte) to form dihydrofolate (7,8-dihydrofolate monoglutamate or H2Pte-Glu). Also catalyzes successive additions of L-glutamate to tetrahydrofolate or 10-formyltetrahydrofolate or 5,10-methylenetetrahydrofolate, leading to folylpolyglutamate derivatives. This Haemophilus influenzae (strain ATCC 51907 / DSM 11121 / KW20 / Rd) protein is Dihydrofolate synthase/folylpolyglutamate synthase (folC).